The following is a 216-amino-acid chain: Putative cat eye syndrome critical region protein 9 (216 aa).

An N-terminal signal peptide occupies residues 1–23 (MQSHLAPLACAAAAGRAGGSCQA). A glycan (N-linked (GlcNAc...) asparagine) is linked at N148.

As to expression, ubiquitously expressed with higher expression in heart.

It localises to the secreted. This Homo sapiens (Human) protein is Putative cat eye syndrome critical region protein 9 (CECR9).